A 622-amino-acid chain; its full sequence is Galactolipid galactosyltransferase SFR2, chloroplastic (622 aa).

At 1–3 (MEL) the chain is on the stromal side. A helical; Signal-anchor membrane pass occupies residues 4–24 (FALLIKVAGLLATVTVGANVV). Topologically, residues 25 to 622 (SYSRFRRQNL…LHPALASPFD (598 aa)) are cytoplasmic. A beta-D-glucoside is bound by residues His-222, 266 to 267 (NE), Tyr-377, Glu-429, Trp-467, 474 to 475 (EW), and Phe-483. The active-site Proton donor is Glu-267. Residue Glu-429 is the Nucleophile of the active site.

Belongs to the glycosyl hydrolase 1 family. Expressed in hypocotyls, cotyledons, stems, leaves, pedicels, sepals, anthers and pistils. Limited expression in roots. Not detected in petals or filaments.

The protein localises to the plastid. The protein resides in the chloroplast. It is found in the chloroplast outer membrane. The catalysed reaction is 2 a 1,2-diacyl-3-O-(beta-D-galactosyl)-sn-glycerol = a 1,2-diacyl-3-O-[beta-D-galactosyl-(1-&gt;6)-beta-D-galactosyl]-sn-glycerol + a 1,2-diacyl-sn-glycerol. With respect to regulation, induced by MgCl(2). Glycosyl hydrolase family protein acting primarily as a highly specific galactosyltransferase. Synthesizes digalactosyldiacylglycerol from monogalactosyldiacylglycerol in the absence of UDP-galactose in vitro. Hydrolyzes o- and p-nitrophenyl beta-D-glucoside in vitro. Plays a role in freezing tolerance. May play a role in chloroplast protection. This is Galactolipid galactosyltransferase SFR2, chloroplastic from Arabidopsis thaliana (Mouse-ear cress).